A 500-amino-acid chain; its full sequence is Galactofuranose transporter ATP-binding protein YtfR (500 aa).

ABC transporter domains are found at residues 10-245 (LRTE…LGRE) and 259-497 (LSDK…IMNA). Position 42–49 (42–49 (GENGAGKS)) interacts with ATP.

This sequence belongs to the ABC transporter superfamily. In terms of assembly, the complex is composed of two ATP-binding proteins (YtfR), two transmembrane proteins (YtfT and YjfF) and a solute-binding protein (YtfQ).

The protein localises to the cell inner membrane. It carries out the reaction D-galactofuranose(out) + ATP + H2O = D-galactofuranose(in) + ADP + phosphate + H(+). Part of the ABC transporter complex YtfQRT-YjfF involved in galactofuranose transport. Responsible for energy coupling to the transport system. The polypeptide is Galactofuranose transporter ATP-binding protein YtfR (ytfR) (Escherichia coli O157:H7).